Consider the following 336-residue polypeptide: Methionyl-tRNA formyltransferase (336 aa).

Position 110–113 (110–113) interacts with (6S)-5,6,7,8-tetrahydrofolate; the sequence is SLLP.

It belongs to the Fmt family.

It carries out the reaction L-methionyl-tRNA(fMet) + (6R)-10-formyltetrahydrofolate = N-formyl-L-methionyl-tRNA(fMet) + (6S)-5,6,7,8-tetrahydrofolate + H(+). In terms of biological role, attaches a formyl group to the free amino group of methionyl-tRNA(fMet). The formyl group appears to play a dual role in the initiator identity of N-formylmethionyl-tRNA by promoting its recognition by IF2 and preventing the misappropriation of this tRNA by the elongation apparatus. This chain is Methionyl-tRNA formyltransferase, found in Prochlorococcus marinus (strain NATL2A).